Reading from the N-terminus, the 238-residue chain is 1-(5-phosphoribosyl)-5-[(5-phosphoribosylamino)methylideneamino] imidazole-4-carboxamide isomerase (238 aa).

Catalysis depends on aspartate 8, which acts as the Proton acceptor. Residue aspartate 130 is the Proton donor of the active site.

Belongs to the HisA/HisF family.

Its subcellular location is the cytoplasm. It carries out the reaction 1-(5-phospho-beta-D-ribosyl)-5-[(5-phospho-beta-D-ribosylamino)methylideneamino]imidazole-4-carboxamide = 5-[(5-phospho-1-deoxy-D-ribulos-1-ylimino)methylamino]-1-(5-phospho-beta-D-ribosyl)imidazole-4-carboxamide. Its pathway is amino-acid biosynthesis; L-histidine biosynthesis; L-histidine from 5-phospho-alpha-D-ribose 1-diphosphate: step 4/9. This is 1-(5-phosphoribosyl)-5-[(5-phosphoribosylamino)methylideneamino] imidazole-4-carboxamide isomerase from Methanococcus vannielii (strain ATCC 35089 / DSM 1224 / JCM 13029 / OCM 148 / SB).